The chain runs to 404 residues: Pyrophosphate--fructose 6-phosphate 1-phosphotransferase (404 aa).

Gly-13 is a diphosphate binding site. Asn-108 provides a ligand contact to Mg(2+). Residues 136-138 (TID), 180-182 (MGR), Glu-237, and 295-298 (YLQR) each bind substrate. Catalysis depends on Asp-138, which acts as the Proton acceptor.

This sequence belongs to the phosphofructokinase type A (PFKA) family. PPi-dependent PFK group II subfamily. Clade 'B2' sub-subfamily. As to quaternary structure, homodimer. Mg(2+) is required as a cofactor.

The protein localises to the cytoplasm. The enzyme catalyses beta-D-fructose 6-phosphate + diphosphate = beta-D-fructose 1,6-bisphosphate + phosphate + H(+). The protein operates within carbohydrate degradation; glycolysis; D-glyceraldehyde 3-phosphate and glycerone phosphate from D-glucose: step 3/4. Its activity is regulated as follows. Non-allosteric. Functionally, catalyzes the phosphorylation of D-fructose 6-phosphate, the first committing step of glycolysis. Uses inorganic phosphate (PPi) as phosphoryl donor instead of ATP like common ATP-dependent phosphofructokinases (ATP-PFKs), which renders the reaction reversible, and can thus function both in glycolysis and gluconeogenesis. Consistently, PPi-PFK can replace the enzymes of both the forward (ATP-PFK) and reverse (fructose-bisphosphatase (FBPase)) reactions. The protein is Pyrophosphate--fructose 6-phosphate 1-phosphotransferase of Rhodospirillum rubrum (strain ATCC 11170 / ATH 1.1.1 / DSM 467 / LMG 4362 / NCIMB 8255 / S1).